We begin with the raw amino-acid sequence, 530 residues long: uncharacterized protein (530 aa).

Positions 1–33 are disordered; that stretch reads MNNMSLKFPDIAINSSESSDDEDPSSKNEKKDG. A compositionally biased stretch (basic and acidic residues) spans 24-33; that stretch reads PSSKNEKKDG. 12 consecutive transmembrane segments (helical) span residues 83 to 103, 124 to 144, 147 to 167, 181 to 201, 211 to 231, 244 to 264, 323 to 343, 346 to 366, 375 to 395, 404 to 424, 436 to 456, and 471 to 491; these read FFIL…KTAV, WLST…GYLL, FPIS…VLLM, FFSG…TAMW, VVSW…LGYG, YPFL…LFFP, VTNA…YSGI, TLLT…SGIF, IPLA…IWKI, VVGV…LSLL, TVNA…PQLF, and SLVS…YYIF.

The protein belongs to the major facilitator superfamily. Allantoate permease family.

The protein localises to the endoplasmic reticulum. The protein resides in the membrane. This is an uncharacterized protein from Schizosaccharomyces pombe (strain 972 / ATCC 24843) (Fission yeast).